Reading from the N-terminus, the 272-residue chain is Putative B3 domain-containing protein Os02g0455900 (272 aa).

Residues 30-134 constitute a DNA-binding region (TF-B3); that stretch reads GKVLMPSDVS…RFFICCRCTC (105 aa). The disordered stretch occupies residues 189–227; the sequence is TASLGCAAAQPPQVPPTPTPRRRRRSMMVHPEPPEHTTD.

It localises to the nucleus. This Oryza sativa subsp. japonica (Rice) protein is Putative B3 domain-containing protein Os02g0455900.